A 257-amino-acid chain; its full sequence is UPF0246 protein AHA_3667 (257 aa).

This sequence belongs to the UPF0246 family.

The sequence is that of UPF0246 protein AHA_3667 from Aeromonas hydrophila subsp. hydrophila (strain ATCC 7966 / DSM 30187 / BCRC 13018 / CCUG 14551 / JCM 1027 / KCTC 2358 / NCIMB 9240 / NCTC 8049).